The primary structure comprises 273 residues: Eukaryotic translation initiation factor 3 subunit G-2 (273 aa).

The RRM domain occupies 193 to 271 (SAVRISNLSE…LILCVEWSKP (79 aa)).

The protein belongs to the eIF-3 subunit G family. Component of the eukaryotic translation initiation factor 3 (eIF-3) complex. The eIF-3 complex interacts with pix.

It is found in the cytoplasm. In terms of biological role, RNA-binding component of the eukaryotic translation initiation factor 3 (eIF-3) complex, which is involved in protein synthesis of a specialized repertoire of mRNAs and, together with other initiation factors, stimulates binding of mRNA and methionyl-tRNAi to the 40S ribosome. The eIF-3 complex specifically targets and initiates translation of a subset of mRNAs involved in cell proliferation. This subunit can bind 18S rRNA. In Drosophila simulans (Fruit fly), this protein is Eukaryotic translation initiation factor 3 subunit G-2.